Here is a 545-residue protein sequence, read N- to C-terminus: ATP synthase subunit alpha (545 aa).

173–180 (GDRQTGKS) contributes to the ATP binding site.

The protein belongs to the ATPase alpha/beta chains family. As to quaternary structure, F-type ATPases have 2 components, CF(1) - the catalytic core - and CF(0) - the membrane proton channel. CF(1) has five subunits: alpha(3), beta(3), gamma(1), delta(1), epsilon(1). CF(0) has three main subunits: a(1), b(2) and c(9-12). The alpha and beta chains form an alternating ring which encloses part of the gamma chain. CF(1) is attached to CF(0) by a central stalk formed by the gamma and epsilon chains, while a peripheral stalk is formed by the delta and b chains.

The protein resides in the cell membrane. The enzyme catalyses ATP + H2O + 4 H(+)(in) = ADP + phosphate + 5 H(+)(out). Produces ATP from ADP in the presence of a proton gradient across the membrane. The alpha chain is a regulatory subunit. The protein is ATP synthase subunit alpha of Pseudarthrobacter chlorophenolicus (strain ATCC 700700 / DSM 12829 / CIP 107037 / JCM 12360 / KCTC 9906 / NCIMB 13794 / A6) (Arthrobacter chlorophenolicus).